The sequence spans 504 residues: Maturase K (504 aa).

It belongs to the intron maturase 2 family. MatK subfamily.

Its subcellular location is the plastid. It is found in the chloroplast. In terms of biological role, usually encoded in the trnK tRNA gene intron. Probably assists in splicing its own and other chloroplast group II introns. The chain is Maturase K from Taxus baccata (English yew).